Consider the following 183-residue polypeptide: MENGAVYSPTTEEDPGPARGPRSGLAAYCFLGRLPLLRRVLKGLQLSLSLLAFICEEVVSQCTLCGGLYFFEFVSCSAFLLSLLILIVYCTPFYERVDTTKVKSSDFYITLGTGCVFLLASIIFVSTHDRTSAEIAAIVFGFIASFMFLLDFVTMLYEKRQESQLRKSENTTRAEALTEPLNA.

Residue M1 is modified to N-acetylmethionine. Residues 1–20 form a disordered region; it reads MENGAVYSPTTEEDPGPARG. The Cytoplasmic portion of the chain corresponds to 1-39; that stretch reads MENGAVYSPTTEEDPGPARGPRSGLAAYCFLGRLPLLRR. S8 carries the post-translational modification Phosphoserine. The MARVEL domain maps to 33–160; it reads RLPLLRRVLK…DFVTMLYEKR (128 aa). A helical transmembrane segment spans residues 40–60; that stretch reads VLKGLQLSLSLLAFICEEVVS. Over 61 to 67 the chain is Extracellular; the sequence is QCTLCGG. A helical membrane pass occupies residues 68–88; the sequence is LYFFEFVSCSAFLLSLLILIV. Residues 89 to 106 are Cytoplasmic-facing; the sequence is YCTPFYERVDTTKVKSSD. Residues 107–127 form a helical membrane-spanning segment; the sequence is FYITLGTGCVFLLASIIFVST. Residues 128–134 lie on the Extracellular side of the membrane; sequence HDRTSAE. A helical transmembrane segment spans residues 135–155; sequence IAAIVFGFIASFMFLLDFVTM. Residues 156 to 183 are Cytoplasmic-facing; that stretch reads LYEKRQESQLRKSENTTRAEALTEPLNA. T171 carries the phosphothreonine modification.

It belongs to the chemokine-like factor family. In terms of assembly, interacts with PD-L1/CD274 (via transmembrane domain); the interaction is direct. Interacts with CMTM4. Interacts with CD58, ARG1, ENO1 and TMPO.

The protein resides in the cell membrane. It is found in the early endosome membrane. The protein localises to the recycling endosome membrane. Its function is as follows. Master regulator of recycling and plasma membrane expression of PD-L1/CD274, an immune inhibitory ligand critical for immune tolerance to self and antitumor immunity. Associates with both constitutive and IFNG-induced PD-L1/CD274 at recycling endosomes, where it protects PD-L1/CD274 from being targeted for lysosomal degradation, likely by preventing its ubiquitination. May stabilize PD-L1/CD274 expression on antigen presenting cells and potentiates inhibitory signaling by PDCD1/CD279, its receptor on T-cells, ultimately triggering T-cell anergy. This is CKLF-like MARVEL transmembrane domain-containing protein 6 (CMTM6) from Pongo abelii (Sumatran orangutan).